The sequence spans 213 residues: Thiamine-phosphate synthase (213 aa).

4-amino-2-methyl-5-(diphosphooxymethyl)pyrimidine contacts are provided by residues Q38–K42 and N73. Residues D74 and D93 each contribute to the Mg(2+) site. S111 is a 4-amino-2-methyl-5-(diphosphooxymethyl)pyrimidine binding site. T137–S139 provides a ligand contact to 2-[(2R,5Z)-2-carboxy-4-methylthiazol-5(2H)-ylidene]ethyl phosphate. K140 is a 4-amino-2-methyl-5-(diphosphooxymethyl)pyrimidine binding site. 2-[(2R,5Z)-2-carboxy-4-methylthiazol-5(2H)-ylidene]ethyl phosphate is bound by residues G169 and I189–S190.

This sequence belongs to the thiamine-phosphate synthase family. The cofactor is Mg(2+).

It carries out the reaction 2-[(2R,5Z)-2-carboxy-4-methylthiazol-5(2H)-ylidene]ethyl phosphate + 4-amino-2-methyl-5-(diphosphooxymethyl)pyrimidine + 2 H(+) = thiamine phosphate + CO2 + diphosphate. The enzyme catalyses 2-(2-carboxy-4-methylthiazol-5-yl)ethyl phosphate + 4-amino-2-methyl-5-(diphosphooxymethyl)pyrimidine + 2 H(+) = thiamine phosphate + CO2 + diphosphate. It catalyses the reaction 4-methyl-5-(2-phosphooxyethyl)-thiazole + 4-amino-2-methyl-5-(diphosphooxymethyl)pyrimidine + H(+) = thiamine phosphate + diphosphate. It functions in the pathway cofactor biosynthesis; thiamine diphosphate biosynthesis; thiamine phosphate from 4-amino-2-methyl-5-diphosphomethylpyrimidine and 4-methyl-5-(2-phosphoethyl)-thiazole: step 1/1. In terms of biological role, condenses 4-methyl-5-(beta-hydroxyethyl)thiazole monophosphate (THZ-P) and 2-methyl-4-amino-5-hydroxymethyl pyrimidine pyrophosphate (HMP-PP) to form thiamine monophosphate (TMP). In Lysinibacillus sphaericus (strain C3-41), this protein is Thiamine-phosphate synthase.